Reading from the N-terminus, the 611-residue chain is Chaperone protein DnaK (611 aa).

Thr173 is subject to Phosphothreonine; by autocatalysis. Over residues 577–591 (AAAAQAAQGGEADAG) the composition is skewed to low complexity. The segment at 577–611 (AAAAQAAQGGEADAGAGKKDDGVVDADFEEVKDDK) is disordered. Over residues 599 to 611 (VVDADFEEVKDDK) the composition is skewed to acidic residues.

The protein belongs to the heat shock protein 70 family.

Its function is as follows. Acts as a chaperone. The polypeptide is Chaperone protein DnaK (Lysinibacillus sphaericus (strain C3-41)).